A 464-amino-acid polypeptide reads, in one-letter code: Cysteine--tRNA ligase (464 aa).

Position 28 (C28) interacts with Zn(2+). A 'HIGH' region motif is present at residues 30–40 (VTVYDFCHIGH). Zn(2+) contacts are provided by C209, H234, and E238. The 'KMSKS' region signature appears at 266–270 (KMSKS). K269 lines the ATP pocket.

The protein belongs to the class-I aminoacyl-tRNA synthetase family. In terms of assembly, monomer. Zn(2+) is required as a cofactor.

It is found in the cytoplasm. It catalyses the reaction tRNA(Cys) + L-cysteine + ATP = L-cysteinyl-tRNA(Cys) + AMP + diphosphate. The chain is Cysteine--tRNA ligase (cysS) from Buchnera aphidicola subsp. Acyrthosiphon pisum (strain APS) (Acyrthosiphon pisum symbiotic bacterium).